The following is a 339-amino-acid chain: Photosystem II assembly lipoprotein Ycf48 (339 aa).

Positions 1–23 (MNRLIKFSFNLILIFVLGLGLSG) are cleaved as a signal peptide. Cys-24 carries N-palmitoyl cysteine lipidation. A lipid anchor (S-diacylglycerol cysteine) is attached at Cys-24.

This sequence belongs to the Ycf48 family. As to quaternary structure, part of early PSII assembly complexes which includes D1 (psbA) and PsbI; not found in mature PSII. Binds to the lumenal side of PSII complexes. Interacts with YidC.

Its subcellular location is the cellular thylakoid membrane. Functionally, a factor required for optimal assembly of photosystem II (PSII), acting in the early stages of PSII assembly. Also plays a role in replacement of photodamaged D1 (psbA). Assists YidC in synthesis of chlorophyll-binding proteins. This is Photosystem II assembly lipoprotein Ycf48 from Prochlorococcus marinus (strain SARG / CCMP1375 / SS120).